The following is a 109-amino-acid chain: Ubiquitin-related modifier 1 homolog (109 aa).

At Gly109 the chain carries 1-thioglycine. Gly109 participates in a covalent cross-link: Glycyl lysine isopeptide (Gly-Lys) (interchain with K-? in acceptor proteins).

It belongs to the URM1 family. In terms of processing, C-terminal thiocarboxylation occurs in 2 steps, it is first acyl-adenylated (-COAMP) via the hesA/moeB/thiF part of the MOCS3 homolog, then thiocarboxylated (-COSH) via the rhodanese domain of the MOCS3 homolog.

Its subcellular location is the cytoplasm. The protein operates within tRNA modification; 5-methoxycarbonylmethyl-2-thiouridine-tRNA biosynthesis. In terms of biological role, acts as a sulfur carrier required for 2-thiolation of mcm(5)S(2)U at tRNA wobble positions of cytosolic tRNA(Lys), tRNA(Glu) and tRNA(Gln). Serves as sulfur donor in tRNA 2-thiolation reaction by being thiocarboxylated (-COSH) at its C-terminus by MOCS3. The sulfur is then transferred to tRNA to form 2-thiolation of mcm(5)S(2)U. Also acts as a ubiquitin-like protein (UBL) that is covalently conjugated via an isopeptide bond to lysine residues of target proteins. The thiocarboxylated form serves as substrate for conjugation and oxidative stress specifically induces the formation of UBL-protein conjugates. The chain is Ubiquitin-related modifier 1 homolog from Anopheles gambiae (African malaria mosquito).